A 60-amino-acid polypeptide reads, in one-letter code: Lantibiotic Pep5 (60 aa).

Residues 1 to 26 (MKNNKNLFDLEIKKETSQNTDELEPQ) constitute a propeptide that is removed on maturation. The tract at residues 1–29 (MKNNKNLFDLEIKKETSQNTDELEPQTAG) is disordered. Residue Thr-27 is modified to 2-oxobutanoic acid. The segment at residues 35–39 (SVKQC) is a cross-link (lanthionine (Ser-Cys)). 2,3-didehydrobutyrine is present on residues Thr-42 and Thr-46. The beta-methyllanthionine (Thr-Cys) cross-link spans 50 to 53 (TVSC). A cross-link (lanthionine (Ser-Cys)) is located at residues 52–59 (SCKGKNGC).

It belongs to the type A lantibiotic family. In terms of processing, maturation of lantibiotics involves the enzymatic conversion of Thr, and Ser into dehydrated AA and the formation of thioether bonds with cysteine. This is followed by membrane translocation and cleavage of the modified precursor. Post-translationally, after proteolysis of the propeptide, the N-terminal 2,3-didehydrobutyrine hydrolyzes to 2-oxobutanoic acid, possibly spontaneously.

Its function is as follows. Lanthionine-containing peptide antibiotic (lantibiotic) active on Gram-positive bacteria. The bactericidal activity of lantibiotics is based on depolarization of energized bacterial cytoplasmic membranes, initiated by the formation of aqueous transmembrane pores. This Staphylococcus epidermidis protein is Lantibiotic Pep5 (pepA).